The sequence spans 363 residues: Dihydroorotate dehydrogenase (quinone) (363 aa).

FMN is bound by residues 77–81 (AGMDK) and Thr101. Lys81 is a substrate binding site. 126–130 (NRMGF) serves as a coordination point for substrate. 2 residues coordinate FMN: Ser155 and Asn188. Asn188 contacts substrate. Ser191 functions as the Nucleophile in the catalytic mechanism. Position 193 (Asn193) interacts with substrate. FMN contacts are provided by Lys234 and Thr262. A substrate-binding site is contributed by 263–264 (NT). Residues Gly287, Gly316, and 337-338 (YT) each bind FMN.

This sequence belongs to the dihydroorotate dehydrogenase family. Type 2 subfamily. As to quaternary structure, monomer. FMN serves as cofactor.

The protein localises to the cell membrane. The catalysed reaction is (S)-dihydroorotate + a quinone = orotate + a quinol. Its pathway is pyrimidine metabolism; UMP biosynthesis via de novo pathway; orotate from (S)-dihydroorotate (quinone route): step 1/1. Catalyzes the conversion of dihydroorotate to orotate with quinone as electron acceptor. The protein is Dihydroorotate dehydrogenase (quinone) of Chloroflexus aurantiacus (strain ATCC 29366 / DSM 635 / J-10-fl).